The following is a 185-amino-acid chain: dCTP deaminase, dUMP-forming (185 aa).

DCTP contacts are provided by residues K99 to R104, D117, T125 to E127, Q146, Y159, K166, and Q170. The Proton donor/acceptor role is filled by E127.

The protein belongs to the dCTP deaminase family. Homotrimer.

The catalysed reaction is dCTP + 2 H2O = dUMP + NH4(+) + diphosphate. Its pathway is pyrimidine metabolism; dUMP biosynthesis; dUMP from dCTP: step 1/1. Bifunctional enzyme that catalyzes both the deamination of dCTP to dUTP and the hydrolysis of dUTP to dUMP without releasing the toxic dUTP intermediate. The sequence is that of dCTP deaminase, dUMP-forming from Methanospirillum hungatei JF-1 (strain ATCC 27890 / DSM 864 / NBRC 100397 / JF-1).